The chain runs to 336 residues: MGNVLAASSPAPPAAGSPPAPGLVSVPPGFTMPPVAGLTPTPDKKETQEDRLPNPGTFEECHRKCKELFPIQMEGVKLTVNKGLSNYFQVNHTVSLSMIGESNYHFGATYVGTKQLGPAEAFPVLVGDLDNSGSLNAQIIHQVTSNVRSKIALQTQQSKFVNWQLDTEYRGEDFTAAVTLGNPDILVGSGILVAHYLQSITPSLALGGELVYHRRPGEEGTVMSLAGRYTAPNWTATLTLGQAGAHATYYHKANDQLQVGVEFEASTRMQDTSVSFGYQLDLPKANLLFKGSVDSNWIVGATLEKKLPPLPLTLAMGAFLNHKKNKFQCGFGLTIG.

The segment at 1–58 (MGNVLAASSPAPPAAGSPPAPGLVSVPPGFTMPPVAGLTPTPDKKETQEDRLPNPGTF) is disordered. Residues 10-21 (PAPPAAGSPPAP) are compositionally biased toward pro residues. A compositionally biased stretch (basic and acidic residues) spans 42–52 (PDKKETQEDRL).

It belongs to the Tom40 family. In terms of assembly, forms part of the preprotein translocase complex of the outer mitochondrial membrane (TOM complex). Interacts with mitochondrial targeting sequences.

The protein resides in the mitochondrion outer membrane. In terms of biological role, channel-forming protein essential for import of protein precursors into mitochondria. The sequence is that of Mitochondrial import receptor subunit TOM40 homolog (tomm40) from Xenopus tropicalis (Western clawed frog).